We begin with the raw amino-acid sequence, 392 residues long: Small ribosomal subunit protein uS9m (392 aa).

Residues 8–25 (RSSRAMSSASPASASDSD) are compositionally biased toward low complexity. The disordered stretch occupies residues 8–27 (RSSRAMSSASPASASDSDTS).

This sequence belongs to the universal ribosomal protein uS9 family. In terms of assembly, component of the mitochondrial ribosome small subunit (28S) which comprises a 12S rRNA and about 30 distinct proteins.

Its subcellular location is the mitochondrion. This is Small ribosomal subunit protein uS9m (mrps-9) from Caenorhabditis elegans.